The sequence spans 340 residues: Ketol-acid reductoisomerase (NADP(+)) (340 aa).

Positions 1–182 constitute a KARI N-terminal Rossmann domain; that stretch reads MRVYYDRDCD…GGGRSGIIET (182 aa). Residues 24-27, arginine 48, serine 51, serine 53, and 83-86 each bind NADP(+); these read YGSQ and DELQ. The active site involves histidine 108. Glycine 134 serves as a coordination point for NADP(+). Positions 183 to 329 constitute a KARI C-terminal knotted domain; it reads NFREECETDL…ETLRGMMPWI (147 aa). The Mg(2+) site is built by aspartate 191, glutamate 195, glutamate 227, and glutamate 231. Serine 252 contacts substrate.

The protein belongs to the ketol-acid reductoisomerase family. Mg(2+) is required as a cofactor.

It carries out the reaction (2R)-2,3-dihydroxy-3-methylbutanoate + NADP(+) = (2S)-2-acetolactate + NADPH + H(+). The catalysed reaction is (2R,3R)-2,3-dihydroxy-3-methylpentanoate + NADP(+) = (S)-2-ethyl-2-hydroxy-3-oxobutanoate + NADPH + H(+). It functions in the pathway amino-acid biosynthesis; L-isoleucine biosynthesis; L-isoleucine from 2-oxobutanoate: step 2/4. The protein operates within amino-acid biosynthesis; L-valine biosynthesis; L-valine from pyruvate: step 2/4. In terms of biological role, involved in the biosynthesis of branched-chain amino acids (BCAA). Catalyzes an alkyl-migration followed by a ketol-acid reduction of (S)-2-acetolactate (S2AL) to yield (R)-2,3-dihydroxy-isovalerate. In the isomerase reaction, S2AL is rearranged via a Mg-dependent methyl migration to produce 3-hydroxy-3-methyl-2-ketobutyrate (HMKB). In the reductase reaction, this 2-ketoacid undergoes a metal-dependent reduction by NADPH to yield (R)-2,3-dihydroxy-isovalerate. This chain is Ketol-acid reductoisomerase (NADP(+)), found in Jannaschia sp. (strain CCS1).